Reading from the N-terminus, the 53-residue chain is UPF0391 membrane protein YPTS_0599 (53 aa).

2 helical membrane-spanning segments follow: residues 4 to 24 and 27 to 47; these read WGII…GGLA and AAWA…ISLF.

Belongs to the UPF0391 family.

The protein localises to the cell membrane. This Yersinia pseudotuberculosis serotype IB (strain PB1/+) protein is UPF0391 membrane protein YPTS_0599.